The chain runs to 77 residues: Metallothionein-like protein 2B (77 aa).

This sequence belongs to the metallothionein superfamily. Type 15 family. In terms of tissue distribution, expressed in vascular tissues of all organs. Expressed in root and leaf phloem, pollen and root hairs.

In terms of biological role, metallothioneins have a high content of cysteine residues that bind various heavy metals. Functions as a metal chelator of copper (Cu) and zinc (Zn). Functions cooperatively with the phytochelatin synthase PCS1 to protect plants from Cu and cadmium toxicity. Plays a role in Cu homeostasis, specifically in the remobilization of Cu from senescing leaves. The mobilization of Cu from internal sources is important for seed development. This chain is Metallothionein-like protein 2B (MT2B), found in Arabidopsis thaliana (Mouse-ear cress).